The primary structure comprises 304 residues: DCN1-like protein 3 (304 aa).

2 disordered regions span residues 1 to 86 (MGQC…AEES) and 284 to 304 (EGEGRGALSSGPEGLCPEEQT). Residue Gly-2 is the site of N-myristoyl glycine attachment. Residues 86–278 (SSLQRLEELF…LFDTFVEWEM (193 aa)) enclose the DCUN1 domain.

As to quaternary structure, part of a complex containing DCUN1D3, CUL3 and RBX1. Interacts (via the DCUN1 domain) with the unneddylated cullins: interacts with CUL1, CUL2, CUL3, CUL4A, CUL4B and CUL5; these interactions promote the cullin neddylation and the identity of the cullin dictates the affinity of the interaction. Interacts preferentially with CUL3; this interaction triggers the relocalization of CUL3 to the cell membrane where CUL3 is neddylated. Interacts (via DCUN1 domain) with RBX1. May also interact with regulators or subunits of cullin-RING ligases such as RNF7, ELOB and DDB1; these interactions are bridged by cullins. Interacts (via DCUN1 domain) with CAND1; this interaction is bridged by cullins and strongly inhibits cullin neddylation. These CAND-cullin-DCNL complexes can only be neddylated in the presence of a substrate adapter. Interacts (via DCUN1 domain) with the N-terminally acetylated form of UBE2M and UBE2F. As to expression, tends to be down-regulated in different type of cancers, including lung neuroendocrine carcinoma, thyroid Huerthle cell carcinoma and lung squamous cell carcinoma. Mostly expressed in testis and brain. Highly expressed in liver, bladder and renal normal tissue than their tumor tissue counterparts. Palmitoylation stabilizes DCUN1D3 at the cell membrane.

It localises to the cell membrane. The protein resides in the cytoplasm. The protein localises to the nucleus. Its subcellular location is the perinuclear region. Its function is as follows. Contributes to the neddylation of all cullins by transferring NEDD8 from N-terminally acetylated NEDD8-conjugating E2s enzyme to different cullin C-terminal domain-RBX complexes and may play a role in the cell cycle progression by regulating the SCF ubiquitin E3 ligase complex, after UV damage. At the cell membrane, can promote and as well inhibit cullins neddylation. In Homo sapiens (Human), this protein is DCN1-like protein 3.